The chain runs to 429 residues: Septin-11 (429 aa).

The residue at position 2 (Ala-2) is an N-acetylalanine. Ser-9 bears the Phosphoserine mark. The region spanning 38 to 304 is the Septin-type G domain; it reads QGFCFNILCV…ELYRRCKLEE (267 aa). A G1 motif region spans residues 48–55; that stretch reads GETGIGKS. Residues 48–55, Gly-103, 184–192, Gly-238, and Arg-253 each bind GTP; these read GETGIGKS and KADTIAKNE. The tract at residues 100–103 is G3 motif; that stretch reads DTVG. The segment at 183-186 is G4 motif; that stretch reads AKAD. Residues 320-415 adopt a coiled-coil conformation; sequence QETYEAKRNE…QSQAQQSGAQ (96 aa). Residues 398-429 form a disordered region; it reads KKAAAQLLQSQAQQSGAQQTKKDKDKKNASFT. Low complexity predominate over residues 401 to 416; that stretch reads AAQLLQSQAQQSGAQQ. Positions 417 to 429 are enriched in basic and acidic residues; the sequence is TKKDKDKKNASFT.

This sequence belongs to the TRAFAC class TrmE-Era-EngA-EngB-Septin-like GTPase superfamily. Septin GTPase family. As to quaternary structure, septins polymerize into heterooligomeric protein complexes that form filaments, and can associate with cellular membranes, actin filaments and microtubules. Forms homooligomers. GTPase activity is required for filament formation. Interacts with SEPTIN7, SEPTIN9 and SEPTIN12. In terms of tissue distribution, widely expressed, except in leukocytes.

It is found in the cytoplasm. The protein resides in the cytoskeleton. Its subcellular location is the synapse. It localises to the cell projection. The protein localises to the dendritic spine. It is found in the axon. Its function is as follows. Filament-forming cytoskeletal GTPase. May play a role in cytokinesis (Potential). May play a role in the cytoarchitecture of neurons, including dendritic arborization and dendritic spines, and in GABAergic synaptic connectivity. During Listeria monocytogenes infection, not required for the bacterial entry process, but restricts its efficacy. The polypeptide is Septin-11 (Homo sapiens (Human)).